The sequence spans 620 residues: Probable potassium transport system protein Kup 1 (620 aa).

Transmembrane regions (helical) follow at residues 10-30 (LLISAIGVVYGDIGTSPLYAL), 50-70 (VLSLVFWTVMLLVTVKYVIVI), 102-122 (MLLGVIAAALFYGDSMITPAI), 138-158 (LTPYVVPITAVVLTGLFMIQK), 168-188 (FGPVMCLWFLVLALLGIVNIV), 211-231 (MMSFFALGSIVLAVTGGEALY), 246-266 (WFALVLPALLLNYFGQGALLL), 284-304 (MVVPMVGLATCATVIASQAVI), 336-356 (IYIPFTNWTLYIAVMALVIGF), 368-388 (IAVTGTMMIDTILVAFVMALM), 393-413 (WIAVAAVAGTLLLVDLAFFFA), and 415-435 (IIKVAQGGWFPLFIGVLSFTV).

The protein belongs to the HAK/KUP transporter (TC 2.A.72) family.

Its subcellular location is the cell inner membrane. It catalyses the reaction K(+)(in) + H(+)(in) = K(+)(out) + H(+)(out). In terms of biological role, transport of potassium into the cell. Likely operates as a K(+):H(+) symporter. This chain is Probable potassium transport system protein Kup 1, found in Rhodopseudomonas palustris (strain BisB18).